A 165-amino-acid polypeptide reads, in one-letter code: Peptide methionine sulfoxide reductase MsrA (165 aa).

C10 is an active-site residue.

The protein belongs to the MsrA Met sulfoxide reductase family.

The catalysed reaction is L-methionyl-[protein] + [thioredoxin]-disulfide + H2O = L-methionyl-(S)-S-oxide-[protein] + [thioredoxin]-dithiol. The enzyme catalyses [thioredoxin]-disulfide + L-methionine + H2O = L-methionine (S)-S-oxide + [thioredoxin]-dithiol. Its function is as follows. Has an important function as a repair enzyme for proteins that have been inactivated by oxidation. Catalyzes the reversible oxidation-reduction of methionine sulfoxide in proteins to methionine. In Campylobacter jejuni (strain RM1221), this protein is Peptide methionine sulfoxide reductase MsrA.